Consider the following 225-residue polypeptide: NAD(P)H-quinone oxidoreductase subunit K, chloroplastic (225 aa).

[4Fe-4S] cluster contacts are provided by cysteine 43, cysteine 44, cysteine 108, and cysteine 139.

It belongs to the complex I 20 kDa subunit family. NDH is composed of at least 16 different subunits, 5 of which are encoded in the nucleus. The cofactor is [4Fe-4S] cluster.

Its subcellular location is the plastid. The protein resides in the chloroplast thylakoid membrane. It carries out the reaction a plastoquinone + NADH + (n+1) H(+)(in) = a plastoquinol + NAD(+) + n H(+)(out). The enzyme catalyses a plastoquinone + NADPH + (n+1) H(+)(in) = a plastoquinol + NADP(+) + n H(+)(out). Functionally, NDH shuttles electrons from NAD(P)H:plastoquinone, via FMN and iron-sulfur (Fe-S) centers, to quinones in the photosynthetic chain and possibly in a chloroplast respiratory chain. The immediate electron acceptor for the enzyme in this species is believed to be plastoquinone. Couples the redox reaction to proton translocation, and thus conserves the redox energy in a proton gradient. This chain is NAD(P)H-quinone oxidoreductase subunit K, chloroplastic, found in Olimarabidopsis pumila (Dwarf rocket).